The following is an 859-amino-acid chain: Protein FAM171A1 (859 aa).

A signal peptide spans 1-20 (MSGSTAVALLFCVLSCSVWG). Topologically, residues 21 to 307 (AGSKASHEHN…VTQDITSYHT (287 aa)) are extracellular. N-linked (GlcNAc...) asparagine glycosylation is found at Asn-163, Asn-194, and Asn-198. A helical transmembrane segment spans residues 308 to 328 (IFLLAILGGIAFILLVLLCIL). The Cytoplasmic segment spans residues 329-859 (LYYCRRKCLK…ERPLLAFNKK (531 aa)). Disordered regions lie at residues 397–421 (SRDF…LDNL), 484–509 (TNHV…PEPE), and 771–859 (QSPS…FNKK). A compositionally biased stretch (basic and acidic residues) spans 400-416 (FGSREELLSHQEEKSRM). Polar residues-rich tracts occupy residues 484–497 (TNHV…NIQE) and 797–806 (SGSQTPSLQE). Over residues 838–852 (GENKKSPWQKREERP) the composition is skewed to basic and acidic residues.

It belongs to the FAM171 family.

Its subcellular location is the cell membrane. Functionally, may be involved in the regulation of the cytoskeletal dynamics, plays a role in actin stress fiber formation. The polypeptide is Protein FAM171A1 (fam171a1) (Xenopus laevis (African clawed frog)).